The chain runs to 354 residues: Guanine nucleotide-binding protein G(t) subunit alpha-2 (354 aa).

The segment at 1 to 28 (MGSGISAEDKELARRSKELEKKLQEDAD) is disordered. Gly-2 carries the N-myristoyl glycine lipid modification. Positions 7–28 (AEDKELARRSKELEKKLQEDAD) are enriched in basic and acidic residues. Residues 32–354 (KTVKLLLLGA…KENLKDCGLF (323 aa)) enclose the G-alpha domain. Residues 35–48 (KLLLLGAGESGKST) are G1 motif. GTP-binding positions include 40-47 (GAGESGKS), 175-181 (LRSRVKT), 200-204 (DVGGQ), 269-272 (NKKD), and Ala-326. Mg(2+) contacts are provided by Ser-47 and Thr-181. Residues 173–181 (DVLRSRVKT) form a G2 motif region. The interval 196–205 (FRMFDVGGQR) is G3 motif. Residues 265–272 (VLFLNKKD) form a G4 motif region. The segment at 324–329 (TCATDT) is G5 motif.

The protein belongs to the G-alpha family. G(i/o/t/z) subfamily. G proteins are composed of 3 units; alpha, beta and gamma. The alpha chain contains the guanine nucleotide binding site. In the retina, expressed in the rod photoreceptors.

It is found in the cell projection. Its subcellular location is the cilium. The protein localises to the photoreceptor outer segment. The protein resides in the photoreceptor inner segment. In terms of biological role, guanine nucleotide-binding proteins (G proteins) are involved as modulators or transducers in various transmembrane signaling systems. Transducin is an amplifier and one of the transducers of a visual impulse that performs the coupling between rhodopsin and cGMP-phosphodiesterase. This Mus musculus (Mouse) protein is Guanine nucleotide-binding protein G(t) subunit alpha-2 (Gnat2).